The following is a 613-amino-acid chain: DBH-like monooxygenase protein 1 (613 aa).

The N-terminal stretch at 1-19 (MCGWPLLVLWALLPATAAG) is a signal peptide. Topologically, residues 20–587 (SPGRSYPHRV…PLVCEKAASP (568 aa)) are lumenal. Positions 35–148 (GKYWLHWGRQ…STVRVIWAYH (114 aa)) constitute a DOMON domain. An N-linked (GlcNAc...) asparagine glycan is attached at Asn-114. The active site involves Tyr-203. 2 cysteine pairs are disulfide-bonded: Cys-205-Cys-257 and Cys-242-Cys-269. His-235 and His-236 together coordinate Cu cation. The N-linked (GlcNAc...) asparagine glycan is linked to Asn-247. Positions 307, 389, 391, and 464 each coordinate Cu cation. Intrachain disulfides connect Cys-364–Cys-480, Cys-368–Cys-550, and Cys-443–Cys-465. His-389 is an active-site residue. N-linked (GlcNAc...) asparagine glycans are attached at residues Asn-476 and Asn-517. Residues 588–608 (PLHGIFSLRLLTCALLLGSML) form a helical membrane-spanning segment.

Belongs to the copper type II ascorbate-dependent monooxygenase family. Cu(2+) is required as a cofactor. Post-translationally, N-glycosylated. As to expression, broadly exprressed, with highest levels in salivary gland and ovary.

It is found in the endoplasmic reticulum membrane. This chain is DBH-like monooxygenase protein 1 (Moxd1), found in Mus musculus (Mouse).